Reading from the N-terminus, the 392-residue chain is MSEKDNNLTPWQQKHLEYQKRKAEEAKKEKKANQPKKVHFSSPFLKSLPKTEKNFDDTRDEAESAELLEEGFETNNEETQSSEAPIENEKIIAQLEQLSQENEYEYEEEQIKRPSRFFSLFKGSAPLLKKMWPALAIVVLVFVGSLYLISPLSKISTFSVSGNANESSEQVALASGIQTSDSIFNILNNKEKIEATIEQKFPRISAVTINYHFPNRFEAIVKEHTNSVYVKRNDQTYLVLNNGYVITTPVDATKLEKLPVLQNFNDEEVKTFVNAYETLKPAIKSLMTNVTKTPTDATKDFIAIDMSDGNQVRVSLSQLADRLPYYPSVAKQVQAPQVVDMEAGIYTKPKAAYDAYLSQLSTSKSASISAQNAKKTDASSENTAQSTTTSSN.

The interval 1–87 is disordered; the sequence is MSEKDNNLTP…ETQSSEAPIE (87 aa). Over 1 to 131 the chain is Cytoplasmic; it reads MSEKDNNLTP…KGSAPLLKKM (131 aa). Residues 14–32 are compositionally biased toward basic and acidic residues; sequence KHLEYQKRKAEEAKKEKKA. Positions 58–76 are enriched in acidic residues; that stretch reads TRDEAESAELLEEGFETNN. Residues 132–152 traverse the membrane as a helical segment; the sequence is WPALAIVVLVFVGSLYLISPL. Residues 153 to 224 enclose the POTRA domain; the sequence is SKISTFSVSG…NRFEAIVKEH (72 aa). Topologically, residues 153–392 are extracellular; that stretch reads SKISTFSVSG…TAQSTTTSSN (240 aa). A disordered region spans residues 368–392; the sequence is ISAQNAKKTDASSENTAQSTTTSSN.

It belongs to the FtsQ/DivIB family. DivIB subfamily.

It localises to the cell membrane. Cell division protein that may be involved in stabilizing or promoting the assembly of the division complex. This chain is Cell division protein DivIB, found in Lactococcus lactis subsp. lactis (strain IL1403) (Streptococcus lactis).